The primary structure comprises 143 residues: Trypsin inhibitor CMc (143 aa).

The N-terminal stretch at 1–24 (MASCSQHLLSAVAIFSVLAGVATA) is a signal peptide.

This sequence belongs to the protease inhibitor I6 (cereal trypsin/alpha-amylase inhibitor) family. In terms of tissue distribution, endosperm.

It localises to the secreted. Trypsin inhibitor. No alpha-amylase inhibition detected. This is Trypsin inhibitor CMc (ITR2) from Hordeum vulgare (Barley).